The chain runs to 263 residues: Renal glandular kallikrein (263 aa).

A signal peptide spans 1–18 (MWFLILFLALFLGGIDAA). Positions 19-24 (PPVQSR) are cleaved as a propeptide — activation peptide. The region spanning 25 to 260 (IIGGFNCEKN…YRSWIKDVMA (236 aa)) is the Peptidase S1 domain. Disulfide bonds link Cys-31-Cys-175, Cys-50-Cys-66, Cys-153-Cys-221, Cys-186-Cys-200, and Cys-211-Cys-236. His-65 functions as the Charge relay system in the catalytic mechanism. The N-linked (GlcNAc...) asparagine glycan is linked to Asn-102. The active-site Charge relay system is Asp-121. Catalysis depends on Ser-215, which acts as the Charge relay system.

This sequence belongs to the peptidase S1 family. Kallikrein subfamily.

It catalyses the reaction Preferential cleavage of Arg-|-Xaa bonds in small molecule substrates. Highly selective action to release kallidin (lysyl-bradykinin) from kininogen involves hydrolysis of Met-|-Xaa or Leu-|-Xaa.. Glandular kallikreins cleave Met-Lys and Arg-Ser bonds in kininogen to release Lys-bradykinin. The chain is Renal glandular kallikrein from Mastomys natalensis (African soft-furred rat).